A 228-amino-acid polypeptide reads, in one-letter code: Protein Thf1 (228 aa).

A coiled-coil region spans residues 201–223 (IKRSKEVVDELSQTERRKREERA). Residues 209–228 (DELSQTERRKREERAVSQPG) form a disordered region.

Belongs to the THF1 family.

May be involved in photosynthetic membrane biogenesis. This is Protein Thf1 from Gloeobacter violaceus (strain ATCC 29082 / PCC 7421).